We begin with the raw amino-acid sequence, 118 residues long: Small ribosomal subunit protein uS13 (118 aa).

Positions 92 to 118 are disordered; that stretch reads RRGLPVRGQRTKTNARTRKGPRKPIKK.

It belongs to the universal ribosomal protein uS13 family. As to quaternary structure, part of the 30S ribosomal subunit. Forms a loose heterodimer with protein S19. Forms two bridges to the 50S subunit in the 70S ribosome.

In terms of biological role, located at the top of the head of the 30S subunit, it contacts several helices of the 16S rRNA. In the 70S ribosome it contacts the 23S rRNA (bridge B1a) and protein L5 of the 50S subunit (bridge B1b), connecting the 2 subunits; these bridges are implicated in subunit movement. Contacts the tRNAs in the A and P-sites. This Pectobacterium carotovorum subsp. carotovorum (strain PC1) protein is Small ribosomal subunit protein uS13.